The sequence spans 231 residues: Lipoprotein-releasing system ATP-binding protein LolD (231 aa).

The ABC transporter domain occupies 11–231 (LQAEHLGKVY…HMENGRLQPD (221 aa)). 47-54 (GASGSGKS) serves as a coordination point for ATP.

It belongs to the ABC transporter superfamily. Lipoprotein translocase (TC 3.A.1.125) family. In terms of assembly, the complex is composed of two ATP-binding proteins (LolD) and two transmembrane proteins (LolC and LolE).

The protein resides in the cell inner membrane. Functionally, part of the ABC transporter complex LolCDE involved in the translocation of mature outer membrane-directed lipoproteins, from the inner membrane to the periplasmic chaperone, LolA. Responsible for the formation of the LolA-lipoprotein complex in an ATP-dependent manner. The polypeptide is Lipoprotein-releasing system ATP-binding protein LolD (Bordetella bronchiseptica (strain ATCC BAA-588 / NCTC 13252 / RB50) (Alcaligenes bronchisepticus)).